Reading from the N-terminus, the 811-residue chain is Transmembrane protease serine 6 (811 aa).

The interval 1 to 48 (MPRCFQLPCSTRMPTTEVPQAADGQGDAGDGEEAAEPEGKFKPPKNTK) is disordered. The Cytoplasmic segment spans residues 1–59 (MPRCFQLPCSTRMPTTEVPQAADGQGDAGDGEEAAEPEGKFKPPKNTKRKNRDYVRFTP). The segment covering 8-18 (PCSTRMPTTEV) has biased composition (polar residues). A helical; Signal-anchor for type II membrane protein transmembrane segment spans residues 60–80 (LLLVLAALVSAGVMLWYFLGY). Topologically, residues 81-811 (KAEVTVSQVY…VINWIQQVLT (731 aa)) are extracellular. The region spanning 86–209 (VSQVYSGSLR…EGLVILEASV (124 aa)) is the SEA domain. N-linked (GlcNAc...) asparagine glycans are attached at residues N138, N184, N216, N338, N433, and N453. 2 CUB domains span residues 213–336 (VVLN…QDCQ) and 323–440 (FLLS…QISL). C335 and C366 are joined by a disulfide. LDL-receptor class A domains follow at residues 445 to 477 (VQVYYSLYNQSDPCPGEFLCSVNGLCVPACDGI), 478 to 514 (KDCPNGLDERNCVCRAMFQCQEDSTCISLPRVCDRQP), and 518 to 555 (NGSDEEQCQEGVPCGTFTFQCEDRSCVKKPNPECDGQS). Disulfide bonds link C458/C470, C464/C480, C474/C489, C491/C503, C497/C516, C510/C525, C531/C543, C538/C557, C551/C566, and C602/C618. N518 carries an N-linked (GlcNAc...) asparagine glycan. Residues 577–811 (IVGGTVSSEG…VINWIQQVLT (235 aa)) form the Peptidase S1 domain. Catalysis depends on charge relay system residues H617 and D668. 3 cysteine pairs are disulfide-bonded: C702–C768, C733–C747, and C758–C787. Residue S762 is the Charge relay system of the active site.

Belongs to the peptidase S1 family. In terms of assembly, interacts with HJV. In terms of processing, the single-chain zymogen undergoes autoproteolytic processing. This results in TMPRSS6 shedding from the cell surface and conversion into an activated two-chains form which is released extracellularly. The process involves a trans-activation mechanism that requires TMPRSS6 oligomerization. In terms of tissue distribution, expressed at highest levels in adult mice liver, kidney and uterus. Also strongly expressed within the nasal cavity by olfactory epithelial cells. A weak, but detectable, signal in adult mice tissues analyzed including brain, lung, heart, kidney, spleen, muscle, intestine, thymus and pancreas. No signal in residual embryonic yolk sac, developing kidney tubules or in embryonic tissues analyzed including lung, heart, gastrointestinal tract and epithelium of the oral cavity.

Its subcellular location is the cell membrane. In terms of biological role, membrane-bound serine protease. Through the cleavage of cell surface HJV, a regulator of the expression of the iron absorption-regulating hormone hepicidin/HAMP, plays a role in iron homeostasis. The polypeptide is Transmembrane protease serine 6 (Tmprss6) (Mus musculus (Mouse)).